The primary structure comprises 235 residues: tRNA (cytidine-2'-O-)-methyltransferase TrmJ (235 aa).

Residues 77–79 (TSS), glycine 111, isoleucine 131, and 138–140 (PVL) each bind S-adenosyl-L-methionine.

Belongs to the class IV-like SAM-binding methyltransferase superfamily. RNA methyltransferase TrmH family. As to quaternary structure, homodimer.

It is found in the cytoplasm. It carries out the reaction cytidine(32) in tRNA + S-adenosyl-L-methionine = 2'-O-methylcytidine(32) in tRNA + S-adenosyl-L-homocysteine + H(+). Functionally, catalyzes the formation of 2'O-methylated cytidine (Cm32) at position 32 in tRNA. Is specific for cytidine. The chain is tRNA (cytidine-2'-O-)-methyltransferase TrmJ from Sulfolobus acidocaldarius (strain ATCC 33909 / DSM 639 / JCM 8929 / NBRC 15157 / NCIMB 11770).